We begin with the raw amino-acid sequence, 499 residues long: MSHSNPPTGASGGPGSASASAAPARGYYSLKRSIQTAFNDPLDRGLGPPAYQSKVRVMDKYQVIGFISSGTYGRVYKARGRQGQPGEFAIKKFKPDKEGEQITYTGISQSAIREMALCSELRHPNVIRLVETILEDKAIFMVFEYAEHDLLQIIHHHTQQPKHPIPPQTIKSIMFQLLNGCQYLHTNWVLHRDLKPANIMVTSSGEVKVGDLGLARIFWKPVRTLMQGDKVVVTIWYRAPELLMGSHHYTPAVDMWAVGCIFAELLSLRPIFKGEEAKMDNTKKGGSRDMPFQRHQMQKIVDIMGMPTKERWPLLTSMPDYDKLPLLQPPLSASGYSQQPAHSHHHHQHYNQGPQYGGRAGGPTSSSSANSSSAAAAASQSHLDKWYYHTVSQGQTAGPMPHAPPGSLASLGVEGYKLLAGLLEYDPEKRLTAAAALQHNFFSTGDRVSANCFEGCKAEYPHRRVSQEDNDIRTGSVPGTKRSGMPDDSMGRPGKRVKE.

The interval 1–21 (MSHSNPPTGASGGPGSASASA) is disordered. In terms of domain architecture, Protein kinase spans 61 to 442 (YQVIGFISSG…AAAALQHNFF (382 aa)). ATP contacts are provided by residues 67–75 (ISSGTYGRV) and Lys-91. The active-site Proton acceptor is Asp-193. Disordered regions lie at residues 332 to 376 (SASG…SAAA) and 463 to 499 (RRVS…RVKE). Residues 365–376 (SSSSANSSSAAA) are compositionally biased toward low complexity. Over residues 463–472 (RRVSQEDNDI) the composition is skewed to basic and acidic residues.

The protein belongs to the protein kinase superfamily. CMGC Ser/Thr protein kinase family. CDC2/CDKX subfamily. Component of the SRB8-11 complex, a regulatory module of the Mediator complex. Requires Mg(2+) as cofactor.

It is found in the nucleus. It catalyses the reaction L-seryl-[protein] + ATP = O-phospho-L-seryl-[protein] + ADP + H(+). The enzyme catalyses L-threonyl-[protein] + ATP = O-phospho-L-threonyl-[protein] + ADP + H(+). It carries out the reaction [DNA-directed RNA polymerase] + ATP = phospho-[DNA-directed RNA polymerase] + ADP + H(+). Functionally, component of the SRB8-11 complex. The SRB8-11 complex is a regulatory module of the Mediator complex which is itself involved in regulation of basal and activated RNA polymerase II-dependent transcription. The SRB8-11 complex may be involved in the transcriptional repression of a subset of genes regulated by Mediator. It may inhibit the association of the Mediator complex with RNA polymerase II to form the holoenzyme complex. The SRB8-11 complex phosphorylates the C-terminal domain (CTD) of the largest subunit of RNA polymerase II. This is Serine/threonine-protein kinase SSN3 (SSN3) from Pyricularia oryzae (strain 70-15 / ATCC MYA-4617 / FGSC 8958) (Rice blast fungus).